Reading from the N-terminus, the 235-residue chain is Phosphatidylserine decarboxylase proenzyme (235 aa).

The Schiff-base intermediate with substrate; via pyruvic acid role is filled by S204. Residue S204 is modified to Pyruvic acid (Ser); by autocatalysis.

Belongs to the phosphatidylserine decarboxylase family. PSD-A subfamily. Heterodimer of a large membrane-associated beta subunit and a small pyruvoyl-containing alpha subunit. Pyruvate serves as cofactor. Post-translationally, is synthesized initially as an inactive proenzyme. Formation of the active enzyme involves a self-maturation process in which the active site pyruvoyl group is generated from an internal serine residue via an autocatalytic post-translational modification. Two non-identical subunits are generated from the proenzyme in this reaction, and the pyruvate is formed at the N-terminus of the alpha chain, which is derived from the carboxyl end of the proenzyme. The post-translation cleavage follows an unusual pathway, termed non-hydrolytic serinolysis, in which the side chain hydroxyl group of the serine supplies its oxygen atom to form the C-terminus of the beta chain, while the remainder of the serine residue undergoes an oxidative deamination to produce ammonia and the pyruvoyl prosthetic group on the alpha chain.

The protein localises to the cell membrane. It carries out the reaction a 1,2-diacyl-sn-glycero-3-phospho-L-serine + H(+) = a 1,2-diacyl-sn-glycero-3-phosphoethanolamine + CO2. The protein operates within phospholipid metabolism; phosphatidylethanolamine biosynthesis; phosphatidylethanolamine from CDP-diacylglycerol: step 2/2. Functionally, catalyzes the formation of phosphatidylethanolamine (PtdEtn) from phosphatidylserine (PtdSer). This chain is Phosphatidylserine decarboxylase proenzyme, found in Mycobacterium sp. (strain KMS).